The following is a 317-amino-acid chain: Olfactory receptor 10A5 (317 aa).

Residues 1 to 26 (MAIGNWTEISEFILMSFSSLPTEIQS) are Extracellular-facing. A glycan (N-linked (GlcNAc...) asparagine) is linked at N5. A helical membrane pass occupies residues 27-47 (LLFLTFLTIYLVTLKGNSLII). Over 48 to 55 (LVTLADPM) the chain is Cytoplasmic. A helical membrane pass occupies residues 56–76 (LHSPMYFFLRNLSFLEIGFNL). The Extracellular segment spans residues 77–100 (VIVPKMLGTLLAQDTTISFLGCAT). Residues C98 and C190 are joined by a disulfide bond. The helical transmembrane segment at 101 to 121 (QMYFFFFFGVAECFLLATMAY) threads the bilayer. At 122 to 140 (DRYVAICSPLHYPVIMNQR) the chain is on the cytoplasmic side. The helical transmembrane segment at 141–161 (TRAKLAAASWFPGFPVATVQT) threads the bilayer. The Extracellular portion of the chain corresponds to 162 to 198 (TWLFSFPFCGTNKVNHFFCDSPPVLKLVCADTALFEI). A helical transmembrane segment spans residues 199–218 (YAIVGTILVVMIPCLLILCS). The Cytoplasmic portion of the chain corresponds to 219 to 238 (YTRIAAAILKIPSAKGKHKA). The helical transmembrane segment at 239–259 (FSTCSSHLLVVSLFYISSSLT) threads the bilayer. Topologically, residues 260–272 (YFWPKSNNSPESK) are extracellular. The helical transmembrane segment at 273-293 (KLLSLSYTVVTPMLNPIIYSL) threads the bilayer. Topologically, residues 294 to 317 (RNSEVKNALSRTFHKVLALRNCIP) are cytoplasmic.

It belongs to the G-protein coupled receptor 1 family. In terms of tissue distribution, expressed in the tongue.

The protein resides in the cell membrane. Odorant receptor (Potential). May be involved in taste perception. The polypeptide is Olfactory receptor 10A5 (OR10A5) (Homo sapiens (Human)).